The chain runs to 418 residues: Putative methylthiotransferase HP_0285 (418 aa).

Positions 2-110 (KKVYFKTFGC…INALLQEKKR (109 aa)) constitute an MTTase N-terminal domain. Cysteine 11, cysteine 45, cysteine 74, cysteine 144, cysteine 148, and cysteine 151 together coordinate [4Fe-4S] cluster. In terms of domain architecture, Radical SAM core spans 130–355 (FVGKTRAFIK…KDLIFHKNKA (226 aa)).

It belongs to the methylthiotransferase family. Requires [4Fe-4S] cluster as cofactor.

The sequence is that of Putative methylthiotransferase HP_0285 from Helicobacter pylori (strain ATCC 700392 / 26695) (Campylobacter pylori).